Consider the following 86-residue polypeptide: Neurotoxin LmNaTx35.2 (86 aa).

Residues 1–21 form the signal peptide; that stretch reads MQLKIQLLMLVLMTVLTGVLG. The LCN-type CS-alpha/beta domain occupies 22 to 85; sequence KDGYVVHEDT…VYGDKGTYCW (64 aa). 4 disulfide bridges follow: C33-C84, C37-C60, C46-C65, and C50-C67.

It belongs to the long (4 C-C) scorpion toxin superfamily. Sodium channel inhibitor family. Alpha subfamily. In terms of tissue distribution, expressed by the venom gland.

Its subcellular location is the secreted. Functionally, binds voltage-independently at site-3 of voltage-gated sodium channels (Nav) and inhibits the inactivation of the activated channels, thereby blocking neuronal transmission. In Lychas mucronatus (Chinese swimming scorpion), this protein is Neurotoxin LmNaTx35.2.